We begin with the raw amino-acid sequence, 194 residues long: MYIMKQSGWLELICGSMFSGKSEELIRRIKRATFAKQEVKVFKPAIDNRYSSESVVSHNGTSIVCHAIASPEEIFQYISKETDVIGVDEVQFFDETIVGTLTSLADQGYRVIAAGLDLDFRGEPFGVVPDLMALAETVTKLQAVCSVCGSPASRTQRLINGKPASYDDPVILVGASEAYEARCRHHHEVPGNPK.

ATP-binding positions include 15-22 (GSMFSGKS) and 88-91 (DEVQ). The active-site Proton acceptor is the glutamate 89. The Zn(2+) site is built by cysteine 145, cysteine 148, cysteine 183, and histidine 186.

The protein belongs to the thymidine kinase family. In terms of assembly, homotetramer.

The protein resides in the cytoplasm. The catalysed reaction is thymidine + ATP = dTMP + ADP + H(+). This Bacillus licheniformis (strain ATCC 14580 / DSM 13 / JCM 2505 / CCUG 7422 / NBRC 12200 / NCIMB 9375 / NCTC 10341 / NRRL NRS-1264 / Gibson 46) protein is Thymidine kinase.